Reading from the N-terminus, the 344-residue chain is Acireductone dioxygenase (344 aa).

H92, H94, E98, and H137 together coordinate Fe(2+). 4 residues coordinate Ni(2+): H92, H94, E98, and H137.

The protein belongs to the acireductone dioxygenase (ARD) family. The cofactor is Fe(2+). Requires Ni(2+) as cofactor.

It is found in the cytoplasm. The protein localises to the nucleus. It catalyses the reaction 1,2-dihydroxy-5-(methylsulfanyl)pent-1-en-3-one + O2 = 4-methylsulfanyl-2-oxobutanoate + formate + 2 H(+). It carries out the reaction 1,2-dihydroxy-5-(methylsulfanyl)pent-1-en-3-one + O2 = 3-(methylsulfanyl)propanoate + CO + formate + 2 H(+). The protein operates within amino-acid biosynthesis; L-methionine biosynthesis via salvage pathway; L-methionine from S-methyl-5-thio-alpha-D-ribose 1-phosphate: step 5/6. In terms of biological role, catalyzes 2 different reactions between oxygen and the acireductone 1,2-dihydroxy-3-keto-5-methylthiopentene (DHK-MTPene) depending upon the metal bound in the active site. Fe-containing acireductone dioxygenase (Fe-ARD) produces formate and 2-keto-4-methylthiobutyrate (KMTB), the alpha-ketoacid precursor of methionine in the methionine recycle pathway. Ni-containing acireductone dioxygenase (Ni-ARD) produces methylthiopropionate, carbon monoxide and formate, and does not lie on the methionine recycle pathway. This is Acireductone dioxygenase from Leishmania infantum.